The chain runs to 180 residues: Orotate phosphoribosyltransferase (180 aa).

Residues arginine 95, lysine 96, lysine 99, and 121 to 129 (EDVTTTGGS) each bind 5-phospho-alpha-D-ribose 1-diphosphate. Orotate contacts are provided by threonine 125 and arginine 153.

This sequence belongs to the purine/pyrimidine phosphoribosyltransferase family. PyrE subfamily. Homodimer. The cofactor is Mg(2+).

The catalysed reaction is orotidine 5'-phosphate + diphosphate = orotate + 5-phospho-alpha-D-ribose 1-diphosphate. It participates in pyrimidine metabolism; UMP biosynthesis via de novo pathway; UMP from orotate: step 1/2. In terms of biological role, catalyzes the transfer of a ribosyl phosphate group from 5-phosphoribose 1-diphosphate to orotate, leading to the formation of orotidine monophosphate (OMP). The sequence is that of Orotate phosphoribosyltransferase from Methanothermobacter thermautotrophicus (strain ATCC 29096 / DSM 1053 / JCM 10044 / NBRC 100330 / Delta H) (Methanobacterium thermoautotrophicum).